Consider the following 247-residue polypeptide: 5'-nucleotidase SurE (247 aa).

Positions 8, 9, 39, and 95 each coordinate a divalent metal cation.

This sequence belongs to the SurE nucleotidase family. A divalent metal cation is required as a cofactor.

The protein localises to the cytoplasm. It carries out the reaction a ribonucleoside 5'-phosphate + H2O = a ribonucleoside + phosphate. Nucleotidase that shows phosphatase activity on nucleoside 5'-monophosphates. In Thermotoga petrophila (strain ATCC BAA-488 / DSM 13995 / JCM 10881 / RKU-1), this protein is 5'-nucleotidase SurE.